We begin with the raw amino-acid sequence, 361 residues long: DNA replication and repair protein RecF (361 aa).

30–37 (GANGSGKT) is an ATP binding site.

The protein belongs to the RecF family.

It is found in the cytoplasm. In terms of biological role, the RecF protein is involved in DNA metabolism; it is required for DNA replication and normal SOS inducibility. RecF binds preferentially to single-stranded, linear DNA. It also seems to bind ATP. This Glaesserella parasuis serovar 5 (strain SH0165) (Haemophilus parasuis) protein is DNA replication and repair protein RecF.